Reading from the N-terminus, the 284-residue chain is Alpha-S1-casein (284 aa).

An N-terminal signal peptide occupies residues 1–15 (MKLLILTCLVAAALA). Disordered stretches follow at residues 21–44 (RRNA…IVKQ) and 78–111 (SSAE…SATE). Composition is skewed to low complexity over residues 24–36 (AVSS…NSSS) and 78–99 (SSAE…SSSS). Residues Ser79, Ser93, Ser94, Ser95, Ser96, Ser97, Ser98, and Ser99 each carry the phosphoserine modification. Repeat copies occupy residues 138-143 (LLQQAS), 144-149 (LAQQAS), 150-155 (LAQQAS), 156-161 (LAQQAL), 162-167 (LAQQPS), 168-173 (LAQQAA), 174-179 (LAQQAS), 180-185 (LAQQAS), 186-191 (LAQQAS), and 192-197 (LAQKHH). The 10 X 6 AA tandem repeats stretch occupies residues 138–197 (LLQQASLAQQASLAQQASLAQQALLAQQPSLAQQAALAQQASLAQQASLAQQASLAQKHH).

The protein belongs to the alpha-casein family. In terms of tissue distribution, mammary gland specific. Secreted in milk.

The protein resides in the secreted. Important role in the capacity of milk to transport calcium phosphate. The polypeptide is Alpha-S1-casein (Csn1s1) (Rattus norvegicus (Rat)).